Reading from the N-terminus, the 648-residue chain is Exoribonuclease 2 (648 aa).

One can recognise an RNB domain in the interval Arg191–Ile518. One can recognise an S1 motif domain in the interval Lys565–Ile647.

This sequence belongs to the RNR ribonuclease family. RNase II subfamily.

It localises to the cytoplasm. The enzyme catalyses Exonucleolytic cleavage in the 3'- to 5'-direction to yield nucleoside 5'-phosphates.. Involved in mRNA degradation. Hydrolyzes single-stranded polyribonucleotides processively in the 3' to 5' direction. This chain is Exoribonuclease 2, found in Buchnera aphidicola subsp. Cinara cedri (strain Cc).